Consider the following 132-residue polypeptide: Fatty acid-binding protein 1 (132 aa).

At alanine 2 the chain carries N-acetylalanine.

It belongs to the calycin superfamily. Fatty-acid binding protein (FABP) family.

This is Fatty acid-binding protein 1 (FABP-1) from Fasciola gigantica (Giant liver fluke).